The chain runs to 550 residues: Chaperonin GroEL (550 aa).

ATP-binding positions include 30 to 33 (TLGP), Lys-51, 87 to 91 (DGTTT), Gly-415, and Asp-495.

This sequence belongs to the chaperonin (HSP60) family. In terms of assembly, forms a cylinder of 14 subunits composed of two heptameric rings stacked back-to-back. Interacts with the co-chaperonin GroES.

The protein localises to the cytoplasm. The catalysed reaction is ATP + H2O + a folded polypeptide = ADP + phosphate + an unfolded polypeptide.. Together with its co-chaperonin GroES, plays an essential role in assisting protein folding. The GroEL-GroES system forms a nano-cage that allows encapsulation of the non-native substrate proteins and provides a physical environment optimized to promote and accelerate protein folding. This is Chaperonin GroEL from Shewanella woodyi (strain ATCC 51908 / MS32).